Consider the following 227-residue polypeptide: MGASARLLRAVIMGAPGSGKGTVSSRITTHFELKHLSSGDLLRDNMLRGTEIGVLAKAFIDQGKLIPDDVMTRLALHELKNLTQYSWLLDGFPRTLPQAEALDRAYQIDTVINLNVPFEVIKQRLTARWIHPASGRVYNIEFNPPKTVGIDDLTGEPLIQREDDKPETVIKRLKAYEDQTKPVLEYYQKKGVLETFSGTETNKVWPYVYAFLQTKVPQTSQKASVTP.

Residues Gly-17, Gly-19, Lys-20, Gly-21, and Thr-22 each contribute to the GTP site. Lys-20 carries the post-translational modification N6-succinyllysine. Lys-34 is subject to N6-acetyllysine. Ser-37 bears the Phosphoserine mark. Residues 37 to 66 (SSGDLLRDNMLRGTEIGVLAKAFIDQGKLI) form an NMP region. Residues Ser-38 and Arg-43 each coordinate AMP. Lys-57 carries the post-translational modification N6-succinyllysine. Lys-64 lines the AMP pocket. An N6-acetyllysine; alternate mark is found at Lys-64 and Lys-80. An N6-succinyllysine; alternate mark is found at Lys-64 and Lys-80. The AMP site is built by Gly-91, Arg-94, and Gln-98. The segment at 127–164 (ARWIHPASGRVYNIEFNPPKTVGIDDLTGEPLIQREDD) is LID. Residues Arg-128, Tyr-138, Asn-139, Arg-161, and Arg-172 each coordinate GTP. Lys-174 and Lys-189 each carry N6-acetyllysine; alternate. 2 positions are modified to N6-succinyllysine; alternate: Lys-174 and Lys-189. Position 201 (Thr-201) interacts with GTP. Lys-203 is modified (N6-acetyllysine).

The protein belongs to the adenylate kinase family. AK3 subfamily. In terms of assembly, monomer.

Its subcellular location is the mitochondrion matrix. The catalysed reaction is a ribonucleoside 5'-triphosphate + AMP = a ribonucleoside 5'-diphosphate + ADP. The enzyme catalyses GTP + AMP = GDP + ADP. It carries out the reaction ITP + AMP = IDP + ADP. Functionally, mitochondrial adenylate kinase with a specific GTP:AMP phosphotransferase activity. Could also use ITP as phosphate donor. Its physiological function is to recycle GTP into GDP which is necessary for the TCA cycle in the mitochondrial matrix. The polypeptide is GTP:AMP phosphotransferase AK3, mitochondrial (Pongo abelii (Sumatran orangutan)).